Here is a 107-residue protein sequence, read N- to C-terminus: Integration host factor subunit beta (107 aa).

Over residues 82 to 101 the composition is skewed to basic and acidic residues; it reads PGKELRERVDRRAGEPLKAE. Residues 82-107 are disordered; it reads PGKELRERVDRRAGEPLKAEEPDDDL.

This sequence belongs to the bacterial histone-like protein family. Heterodimer of an alpha and a beta chain.

In terms of biological role, this protein is one of the two subunits of integration host factor, a specific DNA-binding protein that functions in genetic recombination as well as in transcriptional and translational control. The protein is Integration host factor subunit beta of Paraburkholderia phytofirmans (strain DSM 17436 / LMG 22146 / PsJN) (Burkholderia phytofirmans).